The primary structure comprises 4262 residues: Polyketide synthase PksM (4262 aa).

The tract at residues 1-114 (MITEQLHISL…ADMHRKEQTA (114 aa)) is N-terminal hotdog fold 1. A PKS/mFAS DH 1 domain is found at 1-271 (MITEQLHISL…GKSVRNMSAF (271 aa)). His-18 acts as the Proton acceptor; for dehydratase activity 1 in catalysis. The C-terminal hotdog fold 1 stretch occupies residues 129–271 (DRILNLDEIY…GKSVRNMSAF (143 aa)). Asp-190 acts as the Proton donor; for dehydratase activity 1 in catalysis. The Carrier 1 domain occupies 293–367 (PAFEMYLRQL…ELAAHLADHY (75 aa)). At Ser-327 the chain carries O-(pantetheine 4'-phosphoryl)serine. Positions 393–831 (GEDIAIIGMA…GSNAHLILEE (439 aa)) constitute a Ketosynthase family 3 (KS3) 1 domain. Active-site for beta-ketoacyl synthase 1 activity residues include Cys-569, His-704, and His-744. An N-terminal hotdog fold 2 region spans residues 1009–1135 (HPLVHRNTSD…GRAVISDEAE (127 aa)). Residues 1009–1301 (HPLVHRNTSD…MRALDGEQHS (293 aa)) enclose the PKS/mFAS DH 2 domain. His-1038 (proton acceptor; for dehydratase activity 2) is an active-site residue. Residues 1149-1301 (SLDTVTSEQC…MRALDGEQHS (153 aa)) form a C-terminal hotdog fold 2 region. Asp-1211 serves as the catalytic Proton donor; for dehydratase activity 2. In terms of domain architecture, Carrier 2 spans 2188–2261 (EKSTEYMKKL…ALVEHFIKTK (74 aa)). Residue Ser-2222 is modified to O-(pantetheine 4'-phosphoryl)serine. Polar residues predominate over residues 2275–2291 (VQQHTPAESRTQSSQKP). The tract at residues 2275-2313 (VQQHTPAESRTQSSQKPDQAAKRTRRFRKLGFSGEKETP) is disordered. Residues 2319–2734 (SRDVAVIGIS…GSNAHIILEE (416 aa)) form the Ketosynthase family 3 (KS3) 2 domain. Active-site for beta-ketoacyl synthase 2 activity residues include Cys-2476, His-2611, and His-2651. Positions 2750-2826 (ALIVLSAKNM…DFIENKADSL (77 aa)) form a coiled coil. Residues 3409–3486 (SIEKRLEHDL…ELISFFLTDH (78 aa)) form the Carrier 3 domain. An O-(pantetheine 4'-phosphoryl)serine modification is found at Ser-3446. The Ketosynthase family 3 (KS3) 3 domain maps to 3529-3944 (DEPIAIIGMS…GTNAHAVIEE (416 aa)). Catalysis depends on for beta-ketoacyl synthase 3 activity residues Cys-3690, His-3825, and His-3865. A coiled-coil region spans residues 4004-4033 (KAMEARLAIVANNQEQLVRKLKEYVEAMKN). Residues 4135 to 4212 (NGKTHIQKII…ALSDHLALKA (78 aa)) enclose the Carrier 4 domain. Position 4172 is an O-(pantetheine 4'-phosphoryl)serine (Ser-4172).

Pantetheine 4'-phosphate is required as a cofactor.

It localises to the cytoplasm. It functions in the pathway antibiotic biosynthesis; bacillaene biosynthesis. Functionally, involved in some intermediate steps for the synthesis of the antibiotic polyketide bacillaene which is involved in secondary metabolism. The protein is Polyketide synthase PksM (pksM) of Bacillus subtilis (strain 168).